The primary structure comprises 907 residues: GPMGIMGPRRGPPGPPGKAGEDGHPGKPGRERGVVGPQGARGFPGTPGIPGFKGIRGHNGIDGIKGQPGAPGVKGEPGAPGENGTPGQAGARGIPGERGRVGAPGPAGARGSDGSVGPVGPAGPIGSAGPPGFPGAPGPKGEIGPVGNPGPAGPAGPRGEVGIPGVSGPVGPPGNPGANGIPGAKGAAGIPGVAGAPGIPGPRGIPGPVGAAGATGARGIVGEPGPAGTKGESGNKGEPGSAGPQGPPGPSGEEGKRGPNGEAGSAGPTGPPGIRGSRGIPGADGRAGVMGPPGSRGASGPAGVRGPNGDSGRPGEPGIMGPRGFPGSPGNVGPAGKEGPAGIPGIDGRPGPAGPAGARGEPGNIGFPGPKGPTGDPGKGPPGFQGIPGPAGTAGEAGKPGERGIPGEFGIPGPAGARGERGPPGESGAAGPAGPIGSRGPSGPPGPDGAKGEPGVVGAPGTAGPSGPSGIPGERGAAGIPGPKGEKGETGIRGAPGAVGAPGPAGANGDRGEAGPAGPAGPAGPRGSPGERGEVGPAGPNGFAGPAGAAGQPGAKGERKGPKGENGPVGPTGPVGSAGPAGPNGPPGPAGSRGDGGPPGATGFPGAAGRTGPPGPAGITGPPGPPGAAGKEGIRGDQGPVGRAGETGASGPPGFAGEKGPNGEAGTAGAPGIPGPQGIIGAPGIIGIPGSRGERGIPGVAGSVGEPGPIGIAGPPGARGPPGAVGSPGVNGAPGEAGRDGNPGNDGPPGRGYPGNSGPVGAAGAPGSPGPVGPTGKHGNRGEPGPVGSVGPAGAVGPRGPSGPQGIRGDKGEPGDKGPRGIPGIKGHNGIQGIPGIAGQHGDQGAPGSVGPAGPRGPAGPTGPAGKDGRIGHPGSVGPAGIRGSQGSQGPAGPPGPPGPPGPPGPS.

2 disordered regions span residues 1–183 (GPMG…GIPG) and 199–907 (IPGP…PGPS). Positions 19-33 (AGEDGHPGKPGRERG) are enriched in basic and acidic residues. Composition is skewed to low complexity over residues 101-130 (VGAP…SAGP), 155-169 (AGPR…VSGP), and 206-221 (PGPV…RGIV). Asn-260 bears the Deamidated asparagine mark. The residue at position 272 (Pro-272) is a 4-hydroxyproline. Low complexity-rich tracts occupy residues 272 to 281 (PGIRGSRGIP), 292 to 307 (PPGS…VRGP), 340 to 362 (PAGI…RGEP), 424 to 441 (PGES…SRGP), 453 to 475 (EPGV…PGER), 495 to 507 (APGA…PAGA), 535 to 555 (VGPA…QPGA), and 566 to 581 (NGPV…AGPA). A compositionally biased stretch (gly residues) spans 591-600 (GSRGDGGPPG). Low complexity-rich tracts occupy residues 601 to 611 (ATGFPGAAGRT), 664 to 691 (EAGT…IPGS), 706 to 745 (EPGP…NPGN), 756 to 766 (NSGPVGAAGAP), and 783 to 804 (EPGP…PSGP). Residues 808-819 (RGDKGEPGDKGP) are compositionally biased toward basic and acidic residues. Residues 892–907 (AGPPGPPGPPGPPGPS) show a composition bias toward pro residues.

The protein belongs to the fibrillar collagen family. As to quaternary structure, trimers of one alpha 2(I) and two alpha 1(I) chains. Interacts (via C-terminus) with TMEM131 (via PapD-L domain); the interaction is direct and is involved in assembly and TRAPPIII ER-to-Golgi transport complex-dependent secretion of collagen. Prolines at the third position of the tripeptide repeating unit (G-X-Y) are hydroxylated in some or all of the chains. In terms of tissue distribution, forms the fibrils of tendon, ligaments and bones. In bones, the fibrils are mineralized with calcium hydroxyapatite.

It localises to the secreted. It is found in the extracellular space. The protein resides in the extracellular matrix. In terms of biological role, type I collagen is a member of group I collagen (fibrillar forming collagen). The protein is Collagen alpha-2(I) chain of Macrauchenia sp.